Consider the following 207-residue polypeptide: Proteasome subunit beta (207 aa).

Positions Met-1–Gly-7 are cleaved as a propeptide — removed in mature form; by autocatalysis. Thr-8 acts as the Nucleophile in catalysis.

Belongs to the peptidase T1B family. The 20S proteasome core is composed of 14 alpha and 14 beta subunits that assemble into four stacked heptameric rings, resulting in a barrel-shaped structure. The two inner rings, each composed of seven catalytic beta subunits, are sandwiched by two outer rings, each composed of seven alpha subunits. The catalytic chamber with the active sites is on the inside of the barrel. Has a gated structure, the ends of the cylinder being occluded by the N-termini of the alpha-subunits. Is capped at one or both ends by the proteasome regulatory ATPase, PAN.

Its subcellular location is the cytoplasm. It carries out the reaction Cleavage of peptide bonds with very broad specificity.. The formation of the proteasomal ATPase PAN-20S proteasome complex, via the docking of the C-termini of PAN into the intersubunit pockets in the alpha-rings, triggers opening of the gate for substrate entry. Interconversion between the open-gate and close-gate conformations leads to a dynamic regulation of the 20S proteasome proteolysis activity. In terms of biological role, component of the proteasome core, a large protease complex with broad specificity involved in protein degradation. This Methanothrix thermoacetophila (strain DSM 6194 / JCM 14653 / NBRC 101360 / PT) (Methanosaeta thermophila) protein is Proteasome subunit beta.